Here is a 142-residue protein sequence, read N- to C-terminus: Large ribosomal subunit protein uL13 (142 aa).

Belongs to the universal ribosomal protein uL13 family. In terms of assembly, part of the 50S ribosomal subunit.

This protein is one of the early assembly proteins of the 50S ribosomal subunit, although it is not seen to bind rRNA by itself. It is important during the early stages of 50S assembly. This chain is Large ribosomal subunit protein uL13, found in Maridesulfovibrio salexigens (strain ATCC 14822 / DSM 2638 / NCIMB 8403 / VKM B-1763) (Desulfovibrio salexigens).